Consider the following 308-residue polypeptide: Vacuolar lysine transporter YPQ1 (308 aa).

The Vacuolar segment spans residues 1-12; that stretch reads MQLVPLELNRST. Asn9 is a glycosylation site (N-linked (GlcNAc...) asparagine). Residues 10-76 enclose the PQ-loop 1 domain; that stretch reads RSTLSGISGS…QHLLSTMIIL (67 aa). The helical transmembrane segment at 13–33 threads the bilayer; it reads LSGISGSISISCWIIVFVPQI. The Cytoplasmic segment spans residues 34–44; that stretch reads YENFYRKSSDG. Residues 45-65 form a helical membrane-spanning segment; it reads LSLLFVVLWLAGDVFNLMGAV. The Vacuolar segment spans residues 66–68; that stretch reads MQH. Residues 69–89 traverse the membrane as a helical segment; it reads LLSTMIILAAYYTVADIILLG. Residues 90 to 167 lie on the Cytoplasmic side of the membrane; it reads QCLWYDNEEK…EVNSRNLIKD (78 aa). A helical transmembrane segment spans residues 168-188; that stretch reads IFIVSGVVFVGFISWYVTYCV. Asn189 is a glycosylation site (N-linked (GlcNAc...) asparagine). Residues 189–205 are Vacuolar-facing; it reads NYTQPPPVEDPSLPVPE. Residues 206-226 traverse the membrane as a helical segment; that stretch reads LQINWMAQIFGYLSALLYLGS. The PQ-loop 2 domain occupies 211 to 274; it reads MAQIFGYLSA…ISLDWKYLIM (64 aa). Over 227-244 the chain is Cytoplasmic; sequence RIPQILLNFKRKSCEGIS. Residues 245–265 form a helical membrane-spanning segment; that stretch reads FLFFLFACLGNTTFIFSVIVI. The Vacuolar portion of the chain corresponds to 266-277; the sequence is SLDWKYLIMNAS. The N-linked (GlcNAc...) asparagine glycan is linked to Asn275. A helical membrane pass occupies residues 278–298; the sequence is WLVGSIGTLFMDFVIFSQFFI. Over 299-308 the chain is Cytoplasmic; it reads YKRNKKFILN.

It belongs to the laat-1 family.

It localises to the vacuole membrane. In terms of biological role, amino acid transporter that moves lysine into the vacuole. May also contribute to low affinity arginine import into the vacuole. Has also been suggested to mediate export of cationic amino acids from the vacuole. May function as an amino acid/proton antiporter. In Saccharomyces cerevisiae (strain ATCC 204508 / S288c) (Baker's yeast), this protein is Vacuolar lysine transporter YPQ1 (YPQ1).